The following is a 317-amino-acid chain: Methionyl-tRNA formyltransferase (317 aa).

112–115 (SLLP) lines the (6S)-5,6,7,8-tetrahydrofolate pocket.

Belongs to the Fmt family.

It carries out the reaction L-methionyl-tRNA(fMet) + (6R)-10-formyltetrahydrofolate = N-formyl-L-methionyl-tRNA(fMet) + (6S)-5,6,7,8-tetrahydrofolate + H(+). Attaches a formyl group to the free amino group of methionyl-tRNA(fMet). The formyl group appears to play a dual role in the initiator identity of N-formylmethionyl-tRNA by promoting its recognition by IF2 and preventing the misappropriation of this tRNA by the elongation apparatus. In Histophilus somni (strain 2336) (Haemophilus somnus), this protein is Methionyl-tRNA formyltransferase.